A 640-amino-acid chain; its full sequence is Protein argonaute (640 aa).

Residues 1 to 100 are N-terminal domain; it reads MYLNLYEIKI…YIKKKFIDNN (100 aa). The tract at residues 101-153 is linker L1; sequence FYYKRGNNYISINDKFPLDSNTNVNAHLTYKIKLYKINERYYISVLPKFTFLS. The PAZ domain stretch occupies residues 154–209; the sequence is DKPALESPIKSTYLFNIKSGKTFPYISGLNGVLKIDLGENGIKEVLFPENYYFNFT. Positions 210 to 291 are linker L2; it reads SKEAEKFGFS…KYSFYKNDQK (82 aa). Residues 292 to 423 form a mid domain region; it reads IKIAFFFSSK…YVYKMGNFIP (132 aa). The segment at 424 to 640 is PIWI domain; it reads ECQPYVIRNL…EWKLYIPYMK (217 aa). Residues Asp445, Glu481, Asp515, and Asn623 contribute to the active site. Asp445 contacts Mn(2+). 2 residues coordinate Mn(2+): Asp515 and Asn623.

The protein belongs to the argonaute family. Long pAgo subfamily. The cofactor is Mn(2+).

Functionally, a highly versatile argonaute that uses 5'-phospho- and 5'-OH- guide RNA (gRNA) or DNA (gDNA) to cleave target RNA or ssDNA (tDNA) in all possible combinations; has no detectable activity in the absence of guide. Uses short guide sequences (18-21 nucleotides (nt) on average) to bind complementary target nucleic acids resulting in target cleavage in a site-specific manner. Using 5'-phospho-gRNA or 5'-OH-gRNA the cleavage site is 10 nt downstream of the target residue base-paired with the 5'-end of the gRNA, using 5'-phospho-gDNA the cleavage site is 11 nucleotides (nt) downstream, while with 5'-OH-gDNA the cleavage site is 9 nt downstream. In Marinitoga hydrogenitolerans (strain DSM 16785 / JCM 12826 / AT1271), this protein is Protein argonaute.